The chain runs to 273 residues: ComE operon protein 4 (273 aa).

It belongs to the pyrroline-5-carboxylate reductase family.

Its function is as follows. Dispensable for transformability. Not known if it can act as a pyrroline-5-carboxylate reductase. The polypeptide is ComE operon protein 4 (comER) (Bacillus subtilis (strain 168)).